We begin with the raw amino-acid sequence, 120 residues long: UPF0382 membrane protein SSP2132 (120 aa).

The next 4 helical transmembrane spans lie at 3 to 23 (VFIILGALNAMMAVGTGAFGA), 46 to 66 (MYHGLGLLAIGIISGTTSINV), 69 to 89 (VGWLLFFGIVFFSGSLYILAL), and 94 to 114 (IIGAITPIGGVLFIVGWLMLV).

The protein belongs to the UPF0382 family.

The protein resides in the cell membrane. The polypeptide is UPF0382 membrane protein SSP2132 (Staphylococcus saprophyticus subsp. saprophyticus (strain ATCC 15305 / DSM 20229 / NCIMB 8711 / NCTC 7292 / S-41)).